A 168-amino-acid polypeptide reads, in one-letter code: Endoribonuclease YbeY (168 aa).

Residues histidine 122, histidine 126, and histidine 132 each contribute to the Zn(2+) site.

Belongs to the endoribonuclease YbeY family. The cofactor is Zn(2+).

It localises to the cytoplasm. Single strand-specific metallo-endoribonuclease involved in late-stage 70S ribosome quality control and in maturation of the 3' terminus of the 16S rRNA. This is Endoribonuclease YbeY from Brucella abortus (strain 2308).